We begin with the raw amino-acid sequence, 295 residues long: Giardin subunit alpha-1 (295 aa).

Annexin repeat units follow at residues Pro-2–Phe-71, Asp-73–Trp-143, Gly-153–Ala-223, and Gly-226–Arg-293.

It belongs to the annexin family. Giardin subunit alpha subfamily.

It is found in the cytoplasm. The protein resides in the cytoskeleton. Giardins are involved in parasite attachment to the intestinal mucosa and in the cytoskeletal disassembly and reassembly that marks the transition from infectious trophozoite to transmissible cyst. They may interact with other cytoskeletal proteins such as microtubules in the microribbons or crossbridges, to maintain the integrity of the ventral disk. This chain is Giardin subunit alpha-1, found in Giardia intestinalis (Giardia lamblia).